Consider the following 1232-residue polypeptide: Chromosome-associated kinesin KIF4A (1232 aa).

The region spanning 9 to 336 (PVRVALRCRP…LRYADRARKI (328 aa)) is the Kinesin motor domain. 88-95 (GQTGSGKT) provides a ligand contact to ATP. The stretch at 350 to 999 (ELNHLKQQVQ…IKQKLTLLQV (650 aa)) forms a coiled coil. Position 394 is a phosphoserine (Ser394). The disordered stretch occupies residues 496–515 (AQVETSPETSRSSDAFTTQH). The span at 497–515 (QVETSPETSRSSDAFTTQH) shows a compositional bias: polar residues. Residues 663-1232 (QWKQKKDKEV…GCSPIEEEAH (570 aa)) form a required for the interaction with PRC1 region. The short motif at 793–798 (PKLRRR) is the Nuclear localization signal element. The residue at position 799 (Thr799) is a Phosphothreonine. Phosphoserine is present on residues Ser801, Ser810, Ser815, and Ser951. Thr995 carries the post-translational modification Phosphothreonine. The tract at residues 1000–1232 (ASRQKHLPKD…GCSPIEEEAH (233 aa)) is globular. Phosphoserine is present on residues Ser1001, Ser1013, Ser1017, Ser1028, and Ser1126. Residues 1086–1144 (CSCKGWCGNKQCGCRKQKSDCGVDCCCDPTKCRNRQQGKDSLGTVERTQDSEGSFKLED) form a CRD; required for [4Fe-4S] cluster binding and localization to the spindle midzone and midbody during anaphase and telophase region. Positions 1122-1142 (QGKDSLGTVERTQDSEGSFKL) are disordered. Positions 1132-1142 (RTQDSEGSFKL) are enriched in basic and acidic residues. At Thr1181 the chain carries Phosphothreonine. Position 1186 is a phosphoserine (Ser1186). A Glycyl lysine isopeptide (Lys-Gly) (interchain with G-Cter in SUMO2) cross-link involves residue Lys1194. Residue Ser1225 is modified to Phosphoserine.

Belongs to the TRAFAC class myosin-kinesin ATPase superfamily. Kinesin family. Chromokinesin subfamily. In terms of assembly, interacts with the cytosolic iron-sulfur protein assembly (CIA) complex components CIAO2B and MMS19; the interactions facilitate the transfer of Fe-S clusters to KIF4A to ensure proper localization of KIF4A to mitotic machinery components. Interacts (via C-terminus) with unphosphorylated PRC1 (via N-terminus); the interaction is required for the progression of mitosis. Requires [2Fe-2S] cluster as cofactor. [4Fe-4S] cluster is required as a cofactor. In terms of tissue distribution, highly expressed in hematopoietic tissues, fetal liver, spleen, thymus and adult thymus and bone marrow. Lower levels are found in heart, testis, kidney, colon and lung.

It is found in the nucleus matrix. The protein localises to the cytoplasm. It localises to the cytoskeleton. Its subcellular location is the spindle. The protein resides in the midbody. It is found in the chromosome. Functionally, iron-sulfur (Fe-S) cluster binding motor protein that has a role in chromosome segregation during mitosis. Translocates PRC1 to the plus ends of interdigitating spindle microtubules during the metaphase to anaphase transition, an essential step for the formation of an organized central spindle midzone and midbody and for successful cytokinesis. May play a role in mitotic chromosomal positioning and bipolar spindle stabilization. The protein is Chromosome-associated kinesin KIF4A (KIF4A) of Homo sapiens (Human).